Reading from the N-terminus, the 61-residue chain is Large ribosomal subunit protein bL28 (61 aa).

Belongs to the bacterial ribosomal protein bL28 family.

The polypeptide is Large ribosomal subunit protein bL28 (Nautilia profundicola (strain ATCC BAA-1463 / DSM 18972 / AmH)).